The chain runs to 229 residues: ATP synthase subunit a 1 (229 aa).

6 consecutive transmembrane segments (helical) span residues 25 to 45 (ADAVAYTWLIMLLLLLFSFLA), 86 to 106 (VATVGLFVLVSNLIGLIPGFF), 111 to 131 (NINTTAACAIVVFIATHVVGI), 142 to 162 (FCGPILWLAPVMFFIEVIGHL), 181 to 201 (LVLIIFFGLAPFLVPLPMMLM), and 202 to 222 (GVLVSFIQAFVFMLLTMIYIQ).

The protein belongs to the ATPase A chain family. In terms of assembly, F-type ATPases have 2 components, CF(1) - the catalytic core - and CF(0) - the membrane proton channel. CF(1) has five subunits: alpha(3), beta(3), gamma(1), delta(1), epsilon(1). CF(0) has three main subunits: a(1), b(2) and c(9-12). The alpha and beta chains form an alternating ring which encloses part of the gamma chain. CF(1) is attached to CF(0) by a central stalk formed by the gamma and epsilon chains, while a peripheral stalk is formed by the delta and b chains.

The protein resides in the cell inner membrane. Functionally, key component of the proton channel; it plays a direct role in the translocation of protons across the membrane. The chain is ATP synthase subunit a 1 from Pelobacter propionicus (strain DSM 2379 / NBRC 103807 / OttBd1).